The following is a 90-amino-acid chain: uncharacterized protein (90 aa).

It to E.coli RlpA.

This is an uncharacterized protein from Synechocystis sp. (strain ATCC 27184 / PCC 6803 / Kazusa).